A 210-amino-acid polypeptide reads, in one-letter code: Outer-membrane lipoprotein LolB (210 aa).

The N-terminal stretch at 1–19 (MNHLKSFFTALVAGFILTA) is a signal peptide. Residue C20 is the site of N-palmitoyl cysteine attachment. Residue C20 is the site of S-diacylglycerol cysteine attachment.

The protein belongs to the LolB family. In terms of assembly, monomer.

It is found in the cell outer membrane. Its function is as follows. Plays a critical role in the incorporation of lipoproteins in the outer membrane after they are released by the LolA protein. This chain is Outer-membrane lipoprotein LolB, found in Mannheimia succiniciproducens (strain KCTC 0769BP / MBEL55E).